We begin with the raw amino-acid sequence, 68 residues long: Phylloseptin-SP1 (68 aa).

A signal peptide spans 1–22 (MAFLKKSLFLVLFLGLVSLSIC). A propeptide spanning residues 23-45 (EEKERETKEEENEQEDDNREEKR) is cleaved from the precursor. Position 67 is a leucine amide (Leu-67).

In terms of tissue distribution, expressed by the skin glands.

Its subcellular location is the secreted. Its function is as follows. Weak cationic amphipathic alpha-helical antimicrobial peptide with weak activity against Gram-positive and Gram-negative bacteria and fungi. Has been tested against E.coli (MIC&gt;217.69 uM), S.aureus (MIC&gt;217.69 uM), K.pneumoniae (MIC&gt;189.00 uM) and C.albicans (MIC&gt;217.69 uM). Shows a moderate hemolytic activity. The chain is Phylloseptin-SP1 from Agalychnis spurrelli (Gliding leaf frog).